An 88-amino-acid polypeptide reads, in one-letter code: Large ribosomal subunit protein bL27 (88 aa).

The interval Met-1 to Lys-24 is disordered.

This sequence belongs to the bacterial ribosomal protein bL27 family.

This is Large ribosomal subunit protein bL27 from Syntrophobacter fumaroxidans (strain DSM 10017 / MPOB).